The sequence spans 1265 residues: Nestin (1265 aa).

Residues 1–16 (MELLGVRQPFGPQFQE) form a head region. Positions 17–52 (EKYQMLELNHRLESYLGRVKLLEEENKLLREEIHTL) are coil 1A. Residues 17-324 (EKYQMLELNH…ALLDSEGLRI (308 aa)) enclose the IF rod domain. Positions 53–64 (KSSRDPAGQRKA) are linker 1. Residues 65–160 (QEEALSQARR…QVHQENMETM (96 aa)) are coil 1B. A linker 12 region spans residues 161–183 (QASLKQTKQVLMAPQRVQATSIP). The coil 2A stretch occupies residues 184 to 203 (DLGQEYGYKAAQAWQEAANN). The tract at residues 204–206 (YQK) is linker 2. A coil 2B region spans residues 207–324 (QVGRLEESLN…ALLDSEGLRI (118 aa)). The tail stretch occupies residues 325-1265 (DRPTPNKTSS…EGDSWSSGDE (941 aa)). Residues 383–402 (PSWTLTRGTPQRPPSSTSMT) show a composition bias toward polar residues. Disordered regions lie at residues 383–521 (PSWT…TEVS), 667–830 (FEVE…PDME), 863–1073 (HESL…KASQ), 1093–1116 (AQTT…LESS), and 1232–1265 (IRDD…SGDE). A compositionally biased stretch (basic and acidic residues) spans 403–418 (EKTEDHISEETKRSAE). The segment covering 422–441 (DQLQQEKVQQDWTLESTLPK) has biased composition (polar residues). Residues 444–459 (AEPKPELQPEEIKVED) show a composition bias toward basic and acidic residues. Positions 479–496 (LTSVPAEQQGSMSQTPET) are enriched in polar residues. Composition is skewed to acidic residues over residues 508-520 (EVSE…DTEV) and 730-739 (LNEDQSEAEE). Composition is skewed to basic and acidic residues over residues 784–796 (YKSD…HIGE), 803–819 (EKER…RFNT), and 863–897 (HESL…KEED). Over residues 901–910 (FEQNENQQLT) the composition is skewed to polar residues. A compositionally biased stretch (basic and acidic residues) spans 911–935 (EHQHVHTEQVEDKPVHSHETQEHVN). A compositionally biased stretch (low complexity) spans 943–956 (SERSQQEQLEESSL). Polar residues predominate over residues 1015–1043 (PNASQCFQNTSLLAAATPNEQPLTFTNEV). Basic and acidic residues predominate over residues 1061–1070 (SEEKSTDEPK). Composition is skewed to polar residues over residues 1105-1116 (SISPVNENLESS) and 1242-1251 (PAQSKIVQSD). The segment covering 1252 to 1265 (DSADEGDSWSSGDE) has biased composition (acidic residues).

Belongs to the intermediate filament family. Forms homodimers and homotetramers in vitro. In mixtures with other intermediate filament proteins such as vimentin and alpha-internexin, preferentially forms heterodimers. In terms of tissue distribution, widely expressed throughout the developing nervous system at 24 hours post-fertilization (hpf). As development progresses, expression becomes restricted to proliferative zones of the developing and postembryonic central nervous system. In the peripheral nervous system, expressed in the cranial ganglia. Also expressed in mesodermal muscle precursor cells and in cranial mesenchymal tissue.

Promotes the disassembly of phosphorylated vimentin intermediate filaments (IF) during mitosis and may play a role in the trafficking and distribution of IF proteins and other cellular factors to daughter cells during progenitor cell division. Required for survival, renewal and mitogen-stimulated proliferation of neural progenitor cells. Required for brain and eye development. The sequence is that of Nestin (nes) from Danio rerio (Zebrafish).